The sequence spans 63 residues: Large ribosomal subunit protein uL29 (63 aa).

The protein belongs to the universal ribosomal protein uL29 family.

The polypeptide is Large ribosomal subunit protein uL29 (Marinomonas sp. (strain MWYL1)).